Reading from the N-terminus, the 304-residue chain is Acetyl-coenzyme A carboxylase carboxyl transferase subunit beta (304 aa).

The CoA carboxyltransferase N-terminal domain occupies 23-292 (VWTKCDSCGQ…PNPEAPREGV (270 aa)). Residues cysteine 27, cysteine 30, cysteine 46, and cysteine 49 each coordinate Zn(2+). The segment at 27 to 49 (CDSCGQVLYRAELERNLEVCPKC) adopts a C4-type zinc-finger fold. The segment at 285–304 (PEAPREGVVVPPVPDQEPEA) is disordered. A compositionally biased stretch (pro residues) spans 295–304 (PPVPDQEPEA).

The protein belongs to the AccD/PCCB family. In terms of assembly, acetyl-CoA carboxylase is a heterohexamer composed of biotin carboxyl carrier protein (AccB), biotin carboxylase (AccC) and two subunits each of ACCase subunit alpha (AccA) and ACCase subunit beta (AccD). Zn(2+) is required as a cofactor.

Its subcellular location is the cytoplasm. The catalysed reaction is N(6)-carboxybiotinyl-L-lysyl-[protein] + acetyl-CoA = N(6)-biotinyl-L-lysyl-[protein] + malonyl-CoA. The protein operates within lipid metabolism; malonyl-CoA biosynthesis; malonyl-CoA from acetyl-CoA: step 1/1. In terms of biological role, component of the acetyl coenzyme A carboxylase (ACC) complex. Biotin carboxylase (BC) catalyzes the carboxylation of biotin on its carrier protein (BCCP) and then the CO(2) group is transferred by the transcarboxylase to acetyl-CoA to form malonyl-CoA. The polypeptide is Acetyl-coenzyme A carboxylase carboxyl transferase subunit beta (Shigella sonnei (strain Ss046)).